A 147-amino-acid polypeptide reads, in one-letter code: Large ribosomal subunit protein bL9 (147 aa).

It belongs to the bacterial ribosomal protein bL9 family.

Functionally, binds to the 23S rRNA. In Clostridium botulinum (strain Alaska E43 / Type E3), this protein is Large ribosomal subunit protein bL9.